The sequence spans 413 residues: Alpha-1-antitrypsin-like protein CM55-MS (413 aa).

Residues M1–A24 form the signal peptide. Q25 is modified (pyrrolidone carboxylic acid). N65, N102, N165, and N266 each carry an N-linked (GlcNAc...) asparagine glycan. Residues G368–R387 form an RCL region.

This sequence belongs to the serpin family. In terms of tissue distribution, expressed in liver.

The protein localises to the secreted. In terms of biological role, serine protease inhibitor. This Tamias sibiricus (Siberian chipmunk) protein is Alpha-1-antitrypsin-like protein CM55-MS.